The chain runs to 576 residues: Arginine--tRNA ligase (576 aa).

The short motif at Ala-126–His-136 is the 'HIGH' region element.

This sequence belongs to the class-I aminoacyl-tRNA synthetase family. Monomer.

It localises to the cytoplasm. It carries out the reaction tRNA(Arg) + L-arginine + ATP = L-arginyl-tRNA(Arg) + AMP + diphosphate. In Rickettsia canadensis (strain McKiel), this protein is Arginine--tRNA ligase.